We begin with the raw amino-acid sequence, 142 residues long: Large ribosomal subunit protein uL13 (142 aa).

Belongs to the universal ribosomal protein uL13 family. In terms of assembly, part of the 50S ribosomal subunit.

This protein is one of the early assembly proteins of the 50S ribosomal subunit, although it is not seen to bind rRNA by itself. It is important during the early stages of 50S assembly. In Shewanella amazonensis (strain ATCC BAA-1098 / SB2B), this protein is Large ribosomal subunit protein uL13.